The following is a 70-amino-acid chain: Small, acid-soluble spore protein I (70 aa).

This sequence belongs to the SspI family.

The protein resides in the spore core. In Bacillus cytotoxicus (strain DSM 22905 / CIP 110041 / 391-98 / NVH 391-98), this protein is Small, acid-soluble spore protein I.